A 309-amino-acid polypeptide reads, in one-letter code: L-aminoadipate-semialdehyde dehydrogenase-phosphopantetheinyl transferase (309 aa).

Residues Arg47, 86-91 (RTAKGK), and 108-111 (NISH) each bind CoA. 2 residues coordinate Mg(2+): Asp129 and Glu181. 181–185 (ESFIK) is a CoA binding site. The residue at position 258 (Ser258) is a Phosphoserine.

This sequence belongs to the P-Pant transferase superfamily. AcpS family. In terms of assembly, monomer. Requires Mg(2+) as cofactor.

It localises to the cytoplasm. It is found in the cytosol. It catalyses the reaction apo-[ACP] + CoA = holo-[ACP] + adenosine 3',5'-bisphosphate + H(+). The enzyme catalyses apo-[ACP] + acetyl-CoA = acetyl-[ACP] + adenosine 3',5'-bisphosphate + H(+). Catalyzes the post-translational modification of target proteins by phosphopantetheine. Can transfer the 4'-phosphopantetheine moiety from coenzyme A, regardless of whether the CoA is presented in the free thiol form or as an acetyl thioester, to a serine residue of a broad range of acceptors including the acyl carrier domain of FASN. The sequence is that of L-aminoadipate-semialdehyde dehydrogenase-phosphopantetheinyl transferase (AASDHPPT) from Pongo abelii (Sumatran orangutan).